A 218-amino-acid polypeptide reads, in one-letter code: MSETEIKGILGTKLGMTQIFDEDNRVIPVTVVEAGPCVVTQIRTVETDGYNAIQIAYGEIDPRKANKPAAGHFKKAGVTPRRHVAEIRMDDVSGYELGQDVTVEIFEGINFVDVTGTTKGKGYAGAMKRHGFAGQGAAHGNQAAHRRVGGIGACATPGRVFKGTRMAGRMGSDRVTTQNLKVQKIDADANLILIKGAIPGVRGGIVTVKTAVKGGAHA.

Belongs to the universal ribosomal protein uL3 family. In terms of assembly, part of the 50S ribosomal subunit. Forms a cluster with proteins L14 and L19.

Its function is as follows. One of the primary rRNA binding proteins, it binds directly near the 3'-end of the 23S rRNA, where it nucleates assembly of the 50S subunit. This chain is Large ribosomal subunit protein uL3, found in Corynebacterium diphtheriae (strain ATCC 700971 / NCTC 13129 / Biotype gravis).